The chain runs to 1897 residues: uncharacterized protein (1897 aa).

The Peptidase S74 domain occupies 1661-1888 (SDERVKTNIR…AKVISLESRL (228 aa)). Residues 1865-1894 (AALQEIDRQLQLEKAKVISLESRLSALELK) are a coiled coil.

This is an uncharacterized protein from Micromonas pusilla (Picoplanktonic green alga).